We begin with the raw amino-acid sequence, 150 residues long: MNKTITPSIDSINRQWYLVDAENQTLGRLATEVASVLRGKNKPSFTPHLDTGDFVIIVNAEKIKVTGKKGMQKLYRRHSGRPGGMKVETFNSLQERIPERIVEKAIKGMLPHNALGRQLFRKLKVYKGSEHPHSAQNPQVLSITTNELVK.

The disordered stretch occupies residues 130 to 150 (EHPHSAQNPQVLSITTNELVK). Positions 134-150 (SAQNPQVLSITTNELVK) are enriched in polar residues.

This sequence belongs to the universal ribosomal protein uL13 family. Part of the 50S ribosomal subunit.

This protein is one of the early assembly proteins of the 50S ribosomal subunit, although it is not seen to bind rRNA by itself. It is important during the early stages of 50S assembly. This chain is Large ribosomal subunit protein uL13, found in Prochlorococcus marinus (strain SARG / CCMP1375 / SS120).